The primary structure comprises 1985 residues: MSESEVGKDTTPEPSPANGTGPGPEWGLCPGPPTVGTDTSGASGLGTPRRRTQHNKHKTVAVASAQRSPRALFCLTLTNPIRRSCISIVEWKPFDILILLTIFANCVALGVYIPFPEDDSNTANHNLEQVEYVFLVIFTVETVLKIVAYGLVLHPSAYIRNGWNLLDFIIVVVGLFSVLLEQGPGRPGDAPHTGGKPGGFDVKALRAFRVLRPLRLVSGVPSLHIVVNSIMKALVPLLHIALLVLFVIIIYAIIGLELFLGRMHKTCYFLGSDMEAEEDPSPCASSGSGRSCTLNHTECRGRWPGPNGGITNFDNFFFAMLTVFQCITMEGWTDVLYWMQDAMGYELPWVYFVSLVIFGSFFVLNLVLGVLSGEFSKEREKAKARGDFQKLREKQQMEEDLRGYLDWITQAEELDLHDPSVDGNLASLAEEGRAGHRPQLSELTNRRRGRLRWFSHSTRSTHSTSSHASLPASDTGSMTDTPGDEDEEEGTMASCTRCLNKIMKTRICRHFRRANRGLRARCRRAVKSNACYWAVLLLVFLNTLTIASEHHGQPLWLTQTQEYANKVLLCLFTVEMLLKLYGLGPSVYVASFFNRFDCFVVCGGILETTLVEVGAMQPLGISVLRCVRLLRIFKVTRHWASLSNLVASLLNSMKSIASLLLLLFLFIIIFSLLGMQLFGGKFNFDQTHTKRSTFDTFPQALLTVFQILTGEDWNVVMYDGIMAYGGPFFPGMLVCVYFIILFICGNYILLNVFLAIAVDNLASGDAGTAKDKGREKSSEGNPPKENKVLVPGGENEDAKGARSEGAAPGMEEEEEEEEEEEEEEEEEEENGAGHVELLQEVVPKEKVVPIPEGSAFFCLSQTNPLRKACHTLIHHHIFTSLILVFIILSSVSLAAEDPIRAHSFRNHILGYFDYAFTSIFTVEILLKMTVFGAFLHRGSFCRSWFNLLDLLVVSVSLISFGIHSSAISVVKILRVLRVLRPLRAINRAKGLKHVVQCVFVAIRTIGNIMIVTTLLQFMFACIGVQLFKGKFYSCTDEAKHTLKESKGSFLIYPDGDVSRPLVRERLWVNSDFNFDNVLSAMMALFTVSTFEGWPALLYKAIDANAEDEGPIYNYHVEISVFFIVYIIIIAFFMMNIFVGFVIITFRAQGEQEYQNCELDKNQRQCVEYALKAQPLRRYIPKNPHQYRVWATVNSRAFEYLMFLLILLNTVALAMQHYEQTAPFNYAMDILNMVFTGLFTIEMVLKIIAFKPKHYFADAWNTFDALIVVGSVVDIAVTEVNNGGHLGESSEDTSRISITFFRLFRVMRLVKLLSKGEGIRTLLWTFIKSFQALPYVALLIAMIFFIYAVIGMQMFGLVALQDGTQINRNNNFQTFPQAVLLLFRCATGEAWQEIMLASLPGNRCDPESDFGPGEEFTCGSSFAIVYFISFFMLCAFLIINLFVAVIMDNFDYLTRDWSILGPHHLDEFKRIWSEYDPGAKGRIKHLDVVALLRRIQPPLGFGKLCPHRVACKRLVAMNVPLNSDGTVTFNATLFALVRTSLKIKTEGNLDQANQELRMVIKKIWKRIKQKLLDEVIPPPDEEEVTVGKFYATFLIQDYFRKFRRRKEKGLLGREAPTSTSSALQAGLRSLQDLGPEIRQALTYVTEEEEEEEEAVGQEAEEEEAENNPEPYKDSIDSQPQSRWNSRISVSLPVKEKLPDSLSTGPSDDDGLAPNSRQPSVIQAGSQPHRRSSGVFMFTIPEEGSIQLKGTQGQDNQNEEQELPDWTPDLDRAGRDSFEPSPFTTSLVQQHVNGHMSTPTFAAPHACRSEPSFTIQCLQRLGSCEDLPIPGTYHRGRTSGPSRAQGSWAAPPQKGRLLYAPLLLVEESTVGEGYLGKLGGPLRTFTCLQVPGAHPNPSHRKRGSADSLVEAVLISEGLGLFAQDPRFVALAKQEIADACHLTLDEMDSAASDLLAQRTISLYSDEESILSRFDEEDLGDEMACVHAL.

Residues methionine 1 to threonine 11 show a composition bias toward basic and acidic residues. Positions methionine 1–lysine 56 are disordered. The Cytoplasmic segment spans residues methionine 1–lysine 92. The I repeat unit spans residues asparagine 79 to phenylalanine 375. A helical transmembrane segment spans residues proline 93 to valine 111. The Extracellular portion of the chain corresponds to tyrosine 112–glutamine 129. A helical transmembrane segment spans residues valine 130–tyrosine 149. At glycine 150 to asparagine 161 the chain is on the cytoplasmic side. A helical transmembrane segment spans residues glycine 162–leucine 180. At glutamate 181–aspartate 201 the chain is on the extracellular side. The chain crosses the membrane as a helical span at residues valine 202–valine 220. Over proline 221–histidine 239 the chain is Cytoplasmic. The chain crosses the membrane as a helical span at residues isoleucine 240–phenylalanine 259. Topologically, residues leucine 260–leucine 347 are extracellular. N-linked (GlcNAc...) asparagine glycosylation occurs at asparagine 295. Position 330 (glutamate 330) interacts with Ca(2+). A helical membrane pass occupies residues proline 348–serine 372. At glycine 373–asparagine 529 the chain is on the cytoplasmic side. The tract at residues glutamine 395–glutamate 412 is binding to the beta subunit. Residues serine 455–serine 469 are compositionally biased toward low complexity. The tract at residues serine 455–glycine 490 is disordered. The stretch at asparagine 515 to leucine 761 is one II repeat. A helical transmembrane segment spans residues alanine 530–glutamate 549. At histidine 550–alanine 564 the chain is on the extracellular side. The helical transmembrane segment at asparagine 565–leucine 583 threads the bilayer. The Cytoplasmic segment spans residues glycine 584–serine 591. The chain crosses the membrane as a helical span at residues phenylalanine 592–leucine 610. Over valine 611–glycine 620 the chain is Extracellular. A helical transmembrane segment spans residues isoleucine 621 to tryptophan 639. At alanine 640–serine 658 the chain is on the cytoplasmic side. A helical transmembrane segment spans residues leucine 659–glycine 679. The Extracellular segment spans residues glycine 680–leucine 733. Glutamate 711 is a Ca(2+) binding site. The helical transmembrane segment at valine 734 to valine 758 threads the bilayer. The Cytoplasmic segment spans residues aspartate 759–histidine 876. The segment at alanine 766–histidine 834 is disordered. Basic and acidic residues predominate over residues threonine 768–lysine 787. Over residues methionine 810–asparagine 830 the composition is skewed to acidic residues. The III repeat unit spans residues cysteine 858–phenylalanine 1140. Residues isoleucine 877–alanine 895 traverse the membrane as a helical segment. Residues glutamate 896–tyrosine 911 lie on the Extracellular side of the membrane. Residues phenylalanine 912–phenylalanine 931 traverse the membrane as a helical segment. Topologically, residues glycine 932 to serine 943 are cytoplasmic. The helical transmembrane segment at tryptophan 944 to isoleucine 962 threads the bilayer. The Extracellular portion of the chain corresponds to histidine 963–serine 968. The helical transmembrane segment at valine 969–alanine 988 threads the bilayer. Residues lysine 989–asparagine 1007 are Cytoplasmic-facing. Residues isoleucine 1008 to phenylalanine 1027 traverse the membrane as a helical segment. The Extracellular portion of the chain corresponds to lysine 1028–glutamate 1117. The segment at arginine 1065–asparagine 1155 is dihydropyridine binding. Position 1091 (glutamate 1091) interacts with Ca(2+). The chain crosses the membrane as a helical span at residues isoleucine 1118–valine 1138. At glycine 1139 to arginine 1195 the chain is on the cytoplasmic side. The IV repeat unit spans residues asparagine 1182 to phenylalanine 1449. The helical transmembrane segment at alanine 1196 to methionine 1214 threads the bilayer. The Extracellular portion of the chain corresponds to glutamine 1215 to isoleucine 1229. A helical membrane pass occupies residues leucine 1230–phenylalanine 1249. Residues lysine 1250 to alanine 1256 are Cytoplasmic-facing. The chain crosses the membrane as a helical span at residues aspartate 1257–glutamate 1278. At valine 1279–isoleucine 1295 the chain is on the extracellular side. A helical transmembrane segment spans residues serine 1296–glycine 1315. The Cytoplasmic portion of the chain corresponds to glutamate 1316–tyrosine 1334. Residues valine 1335–phenylalanine 1354 form a helical membrane-spanning segment. Residues glycine 1355 to phenylalanine 1421 lie on the Extracellular side of the membrane. Residues arginine 1402–lysine 1468 are dihydropyridine binding. The segment at glutamate 1414–serine 1457 is phenylalkylamine binding. Residues alanine 1422–methionine 1446 traverse the membrane as a helical segment. Topologically, residues aspartate 1447–valine 1982 are cytoplasmic. 2 disordered regions span residues valine 1643–arginine 1729 and leucine 1746–proline 1778. Residues threonine 1644–asparagine 1665 show a composition bias toward acidic residues. 2 stretches are compositionally biased toward polar residues: residues aspartate 1675–serine 1687 and asparagine 1713–serine 1724. Residues aspartate 1767–phenylalanine 1776 show a composition bias toward basic and acidic residues.

Belongs to the calcium channel alpha-1 subunit (TC 1.A.1.11) family. CACNA1F subfamily. In terms of assembly, voltage-dependent calcium channels are multisubunit complexes, consisting of alpha-1, alpha-2, beta and delta subunits in a 1:1:1:1 ratio. The channel activity is directed by the pore-forming and voltage-sensitive alpha-1 subunit. In many cases, this subunit is sufficient to generate voltage-sensitive calcium channel activity. The auxiliary subunits beta and alpha-2/delta linked by a disulfide bridge regulate the channel activity. Interacts (via IQ domain) with CABP4; in a calcium independent manner. As to expression, expressed in the inner and outer nuclear layers and the genglion cell layer of the retina.

It is found in the membrane. The catalysed reaction is Ca(2+)(in) = Ca(2+)(out). Functionally, voltage-sensitive calcium channels (VSCC) mediate the entry of calcium ions into excitable cells and are also involved in a variety of calcium-dependent processes, including muscle contraction, hormone or neurotransmitter release, gene expression, cell motility, cell division and cell death. The isoform alpha-1F gives rise to L-type calcium currents. Long-lasting (L-type) calcium channels belong to the 'high-voltage activated' (HVA) group. They are blocked by dihydropyridines (DHP), phenylalkylamines, and by benzothiazepines. Activates at more negative voltages and does not undergo calcium-dependent inactivation (CDI), due to incoming calcium ions, during depolarization. In Mus musculus (Mouse), this protein is Voltage-dependent L-type calcium channel subunit alpha-1F.